Here is a 447-residue protein sequence, read N- to C-terminus: Ribosomal protein uS12 methylthiotransferase RimO (447 aa).

The region spanning 4–114 is the MTTase N-terminal domain; that stretch reads PKVGFVSLGC…VMEAVHEYVP (111 aa). Residues Cys-13, Cys-49, Cys-78, Cys-147, Cys-151, and Cys-154 each coordinate [4Fe-4S] cluster. The 238-residue stretch at 133–370 folds into the Radical SAM core domain; it reads LTPKHYAYLK…MQVQQQISAA (238 aa). One can recognise a TRAM domain in the interval 373–443; it reads QKRIGQTMTV…EYDLFAKLIK (71 aa).

This sequence belongs to the methylthiotransferase family. RimO subfamily. [4Fe-4S] cluster serves as cofactor.

The protein localises to the cytoplasm. The catalysed reaction is L-aspartate(89)-[ribosomal protein uS12]-hydrogen + (sulfur carrier)-SH + AH2 + 2 S-adenosyl-L-methionine = 3-methylsulfanyl-L-aspartate(89)-[ribosomal protein uS12]-hydrogen + (sulfur carrier)-H + 5'-deoxyadenosine + L-methionine + A + S-adenosyl-L-homocysteine + 2 H(+). In terms of biological role, catalyzes the methylthiolation of an aspartic acid residue of ribosomal protein uS12. This Acinetobacter baumannii (strain SDF) protein is Ribosomal protein uS12 methylthiotransferase RimO.